A 304-amino-acid chain; its full sequence is Probable aspartoacylase (304 aa).

Zn(2+) contacts are provided by H13 and E16. Residues R55 and 62 to 63 (NR) contribute to the substrate site. H105 contacts Zn(2+). Substrate-binding residues include E163 and Y273.

This sequence belongs to the AspA/AstE family. Aspartoacylase subfamily. Zn(2+) serves as cofactor.

The catalysed reaction is an N-acyl-L-aspartate + H2O = a carboxylate + L-aspartate. The protein is Probable aspartoacylase of Prochlorococcus marinus (strain MIT 9313).